Consider the following 154-residue polypeptide: Cysteine-rich DPF motif domain-containing protein 1 (154 aa).

The protein belongs to the CDPF1 family.

This Drosophila melanogaster (Fruit fly) protein is Cysteine-rich DPF motif domain-containing protein 1.